Here is a 198-residue protein sequence, read N- to C-terminus: Undecaprenyl phosphate transporter A (198 aa).

5 helical membrane-spanning segments follow: residues Met15–Leu35, Ile47–Ile67, Val107–Ile127, Phe135–Ile155, and Gly169–Ile189.

It belongs to the DedA family.

The protein localises to the cell membrane. In terms of biological role, flippase that catalyzes the transport of undecaprenyl phosphate (UndP) across the cytoplasmic membrane, from the external side to the cytoplasmic side. Is involved in UndP recycling during peptidoglycan synthesis. The polypeptide is Undecaprenyl phosphate transporter A (Bacillus subtilis (strain 168)).